Reading from the N-terminus, the 816-residue chain is H(+)/Cl(-) exchange transporter 5 (816 aa).

The disordered stretch occupies residues Met1–Glu28. At Met1–Ala124 the chain is on the cytoplasmic side. The span at Gly12–Ser25 shows a compositional bias: low complexity. 2 consecutive transmembrane segments (helical) span residues Phe125–Glu162 and Val208–Phe231. Positions Gly237–Pro241 match the Selectivity filter part_1 motif. Ser238 serves as a coordination point for chloride. The helical intramembrane region spans Ile240 to Leu247. 2 helical membrane passes run Leu256–Gly275 and Glu281–Asn300. The short motif at Gly279 to Pro283 is the Selectivity filter part_2 element. 2 consecutive intramembrane regions (helical) follow at residues Val312 to Ala324 and Pro328 to Leu336. Helical transmembrane passes span Leu348–Asn366, Leu389–Cys414, Leu422–Phe442, Met498–Met518, and Gly523–Gly542. Positions Gly523–Pro527 match the Selectivity filter part_3 motif. Phe525 serves as a coordination point for chloride. An intramembrane region (helical) is located at residues Gly570–Val584. The segment at residues Thr585–Met587 is an intramembrane region (note=Loop between two helices). The segment at residues Thr588–Thr599 is an intramembrane region (helical). Residues Gly600 to Tyr604 constitute an intramembrane region (note=Loop between two helices). Residues Ile605–Leu622 form a helical membrane-spanning segment. Residues Gly623–Asn816 lie on the Cytoplasmic side of the membrane. Residue Tyr628 participates in chloride binding. CBS domains follow at residues Met656 to Lys720 and Ile752 to Ser812. ATP is bound by residues Thr666, Tyr687 to Gly689, and Thr794 to Asp797.

Belongs to the chloride channel (TC 2.A.49) family. ClC-5/CLCN5 subfamily. Interacts with NEDD4 and NEDD4L. Post-translationally, ubiquitinated by NEDD4L in the presence of albumin; which promotes endocytosis and proteasomal degradation.

Its subcellular location is the golgi apparatus membrane. It localises to the endosome membrane. It is found in the cell membrane. It carries out the reaction 2 chloride(in) + H(+)(out) = 2 chloride(out) + H(+)(in). In terms of biological role, proton-coupled chloride transporter. Functions as antiport system and exchanges chloride ions against protons. Important for normal acidification of the endosome lumen. May play an important role in renal tubular function. The CLC channel family contains both chloride channels and proton-coupled anion transporters that exchange chloride or another anion for protons. The absence of conserved gating glutamate residues is typical for family members that function as channels. The sequence is that of H(+)/Cl(-) exchange transporter 5 (CLCN5) from Sus scrofa (Pig).